The sequence spans 504 residues: Sperm motility kinase 3A (504 aa).

The Protein kinase domain maps to 28-276; the sequence is YVMLETIGHG…VAEVMVHPWV (249 aa). Residues 34 to 42 and K57 contribute to the ATP site; that span reads IGHGGCATV. Catalysis depends on D147, which acts as the Proton acceptor. One can recognise a UBA domain in the interval 294 to 334; the sequence is KPDPAIVKAMGHIGFQAQDIEDSLRQRKFNQTMASYCLLKK. 2 disordered regions span residues 389–421 and 441–468; these read VCGKSTSKKRDRRVSWPSVLGRPRHTAPTMDHT and NSSEESTQGHTRASAADKPVHSRGWPRG. The segment covering 441 to 451 has biased composition (polar residues); it reads NSSEESTQGHT.

Belongs to the protein kinase superfamily. CAMK Ser/Thr protein kinase family. Smok subfamily. In terms of tissue distribution, testis-specific. Expressed in the testis from 22 days postpartum (22 dpp).

The catalysed reaction is L-seryl-[protein] + ATP = O-phospho-L-seryl-[protein] + ADP + H(+). It catalyses the reaction L-threonyl-[protein] + ATP = O-phospho-L-threonyl-[protein] + ADP + H(+). Functionally, may play a role in sperm motility, especially in the regulation of flagellar function. The polypeptide is Sperm motility kinase 3A (Mus musculus (Mouse)).